Consider the following 285-residue polypeptide: Polyamine aminopropyltransferase (285 aa).

Positions 5-241 (DTWFTEHFQT…GWWSVTLSSK (237 aa)) constitute a PABS domain. Q35 is an S-methyl-5'-thioadenosine binding site. The spermidine site is built by H66 and D90. Residues D110 and 141-142 (DG) each bind S-methyl-5'-thioadenosine. D160 acts as the Proton acceptor in catalysis. Position 160–163 (160–163 (DSTD)) interacts with spermidine. Position 167 (P167) interacts with S-methyl-5'-thioadenosine.

Belongs to the spermidine/spermine synthase family. As to quaternary structure, homodimer or homotetramer.

Its subcellular location is the cytoplasm. It carries out the reaction S-adenosyl 3-(methylsulfanyl)propylamine + putrescine = S-methyl-5'-thioadenosine + spermidine + H(+). It participates in amine and polyamine biosynthesis; spermidine biosynthesis; spermidine from putrescine: step 1/1. Catalyzes the irreversible transfer of a propylamine group from the amino donor S-adenosylmethioninamine (decarboxy-AdoMet) to putrescine (1,4-diaminobutane) to yield spermidine. In Xylella fastidiosa (strain Temecula1 / ATCC 700964), this protein is Polyamine aminopropyltransferase.